The primary structure comprises 422 residues: MFSKDKLPVILFLFLAGVINYLDRSALSIAAPFIQDDLTLSATQMGLIFSSFSIGYAIFNFLGGVASDRYGAKLTLFVAMVVWSLFSGAVALAFGFVSLLIIRILFGMGEGPLSATINKMVNNWFPPTQRASVIGVTNSGTPLGGAISGPIVGMIAVAFSWKVSFVLIMIIGLIWAVLWFKFVKEKPQETIKEAPAIKAETSPGEKIPLTFYLKQKTVLFTAFAFFAYNYILFFFLTWFPSYLVDERGLSVESMSVITVIPWILGFIGLAAGGFVSDYVYKKTARKGVLFSRKVVLVTCLFSSAVLIGFAGLVATTAGAVTLVALSVFFLYLTGAIYWAVIQDVVDQNNVGSVGGFMHFLANTAGIIGPALTGFIVDQTGTFSGAFLLAGGLAVFASLAVIRFVRPIIGKPAGTEAENPVSY.

Helical transmembrane passes span 9 to 29 (VILFLFLAGVINYLDRSALSI), 45 to 65 (MGLIFSSFSIGYAIFNFLGGV), 82 to 102 (VWSLFSGAVALAFGFVSLLII), 141 to 161 (TPLGGAISGPIVGMIAVAFSW), 163 to 183 (VSFVLIMIIGLIWAVLWFKFV), 219 to 239 (LFTAFAFFAYNYILFFFLTWF), 256 to 276 (VITVIPWILGFIGLAAGGFVS), 294 to 314 (VVLVTCLFSSAVLIGFAGLVA), 321 to 341 (TLVALSVFFLYLTGAIYWAVI), 356 to 376 (FMHFLANTAGIIGPALTGFIV), and 381 to 401 (TFSGAFLLAGGLAVFASLAVI).

This sequence belongs to the major facilitator superfamily. Phthalate permease family.

It localises to the cell membrane. It catalyses the reaction aldehydo-D-glucuronate(in) + H(+)(in) = aldehydo-D-glucuronate(out) + H(+)(out). The enzyme catalyses aldehydo-D-galacturonate(out) + H(+)(out) = aldehydo-D-galacturonate(in) + H(+)(in). Its function is as follows. Transport of aldohexuronates such as D-glucuronate and D-galacturonate. This chain is Hexuronate transporter, found in Bacillus subtilis (strain 168).